The primary structure comprises 270 residues: Glutamate racemase (270 aa).

Substrate is bound by residues 14–15 (DS) and 46–47 (YG). The active-site Proton donor/acceptor is the Cys77. Residue 78–79 (NT) coordinates substrate. The active-site Proton donor/acceptor is Cys189. 190-191 (TH) lines the substrate pocket.

This sequence belongs to the aspartate/glutamate racemases family.

It catalyses the reaction L-glutamate = D-glutamate. It participates in cell wall biogenesis; peptidoglycan biosynthesis. Functionally, provides the (R)-glutamate required for cell wall biosynthesis. The sequence is that of Glutamate racemase from Neisseria meningitidis serogroup A / serotype 4A (strain DSM 15465 / Z2491).